A 123-amino-acid polypeptide reads, in one-letter code: Putative iron-sulfur cluster insertion protein ErpA (123 aa).

Iron-sulfur cluster is bound by residues Cys51, Cys115, and Cys117.

This sequence belongs to the HesB/IscA family. Homodimer. Iron-sulfur cluster serves as cofactor.

In terms of biological role, required for insertion of 4Fe-4S clusters. In Bordetella avium (strain 197N), this protein is Putative iron-sulfur cluster insertion protein ErpA.